The chain runs to 473 residues: Dol-P-Glc:Glc(2)Man(9)GlcNAc(2)-PP-Dol alpha-1,2-glucosyltransferase (473 aa).

Residues 1-6 (MAQLEG) are Cytoplasmic-facing. Residues 7 to 27 (YCFSAALSCTFLVSCLLFSAF) form a helical membrane-spanning segment. Over 28–64 (SRALREPYMDEIFHLPQAQRYCEGHFSLSQWDPMITT) the chain is Extracellular. Residues 65 to 85 (LPGLYLVSVGVVKPAIWIFAW) traverse the membrane as a helical segment. Residues 86–97 (SEHVVCSIGMLR) are Cytoplasmic-facing. Residues 98–118 (FVNLLFSVGNFYLLYLLFHKV) form a helical membrane-spanning segment. Residues 119–126 (QPRNKAAS) lie on the Extracellular side of the membrane. Residues 127-147 (SIQRVLSTLTLAVFPTLYFFN) form a helical membrane-spanning segment. The Cytoplasmic segment spans residues 148-150 (FLY). Residues 151–171 (YTEAGSMFFTLFAYLMCLYGN) form a helical membrane-spanning segment. Residues 172–175 (HKTS) lie on the Extracellular side of the membrane. Residues 176-196 (AFLGFCGFMFRQTNIIWAVFC) form a helical membrane-spanning segment. Residues 197 to 256 (AGNVIAQKLTEAWKTELQKKEDRLPPIKGPFAEFRKILQFLLAYSMSFKNLSMLFCLTWP) lie on the Cytoplasmic side of the membrane. Residues 257-277 (YILLGFLFCAFVVVNGGIVIG) traverse the membrane as a helical segment. Residues 278–283 (DRSSHE) lie on the Extracellular side of the membrane. A helical membrane pass occupies residues 284–304 (ACLHFPQLFYFFSFTLFFSFP). The Cytoplasmic segment spans residues 305 to 317 (HLLSPSKIKTFLS). The chain crosses the membrane as a helical span at residues 318-338 (LVWKHGILFLVVTLVSVFLVW). Residues 339 to 365 (KFTYAHKYLLADNRHYTFYVWKRVFQR) lie on the Extracellular side of the membrane. Residues 366 to 386 (YAILKYLLVPAYIFAGWSIAD) form a helical membrane-spanning segment. Residues 387 to 392 (SLKSKP) are Cytoplasmic-facing. The helical transmembrane segment at 393-413 (IFWNLMFFICLFIVIVPQKLL) threads the bilayer. Residues 414–436 (EFRYFILPYVIYRLNITLPPTSR) lie on the Extracellular side of the membrane. Residues 437–457 (LVCELSCYAIVNFITFYIFLN) traverse the membrane as a helical segment. At 458–473 (KTFQWPNSQDIQRFMW) the chain is on the cytoplasmic side.

Belongs to the ALG10 glucosyltransferase family. As to quaternary structure, interacts with KCNH1; may regulate KCNH1, possibly by regulating its N-glycosylation. Interacts with KCNH2; may reduce KCNH2 sensitivity to classic proarrhythmic drug blockade, possibly by regulating its N-glycosylation. Highly expressed in heart, placenta, liver, kidney and pancreas. Weakly expressed in lung, skeletal muscle and brain.

Its subcellular location is the endoplasmic reticulum membrane. The catalysed reaction is an alpha-D-Glc-(1-&gt;3)-alpha-D-Glc-(1-&gt;3)-alpha-D-Man-(1-&gt;2)-alpha-D-Man-(1-&gt;2)-alpha-D-Man-(1-&gt;3)-[alpha-D-Man-(1-&gt;2)-alpha-D-Man-(1-&gt;3)-[alpha-D-Man-(1-&gt;2)-alpha-D-Man-(1-&gt;6)]-alpha-D-Man-(1-&gt;6)]-beta-D-Man-(1-&gt;4)-beta-D-GlcNAc-(1-&gt;4)-alpha-D-GlcNAc-diphospho-di-trans,poly-cis-dolichol + a di-trans,poly-cis-dolichyl beta-D-glucosyl phosphate = a alpha-D-Glc-(1-&gt;2)-alpha-D-Glc-(1-&gt;3)-alpha-D-Glc-(1-&gt;3)-alpha-D-Man-(1-&gt;2)-alpha-D-Man-(1-&gt;2)-alpha-D-Man-(1-&gt;3)-[alpha-D-Man-(1-&gt;2)-alpha-D-Man-(1-&gt;3)-[alpha-D-Man-(1-&gt;2)-alpha-D-Man-(1-&gt;6)]-alpha-D-Man-(1-&gt;6)]-beta-D-Man-(1-&gt;4)-beta-D-GlcNAc-(1-&gt;4)-alpha-D-GlcNAc-diphospho-di-trans,poly-cis-dolichol + a di-trans,poly-cis-dolichyl phosphate + H(+). Its pathway is protein modification; protein glycosylation. Dol-P-Glc:Glc(2)Man(9)GlcNAc(2)-PP-Dol alpha-1,2-glucosyltransferase that operates in the biosynthetic pathway of dolichol-linked oligosaccharides, the glycan precursors employed in protein asparagine (N)-glycosylation. The assembly of dolichol-linked oligosaccharides begins on the cytosolic side of the endoplasmic reticulum membrane and finishes in its lumen. The sequential addition of sugars to dolichol pyrophosphate produces dolichol-linked oligosaccharides containing fourteen sugars, including two GlcNAcs, nine mannoses and three glucoses. Once assembled, the oligosaccharide is transferred from the lipid to nascent proteins by oligosaccharyltransferases. In the lumen of the endoplasmic reticulum, adds the third and last glucose residue from dolichyl phosphate glucose (Dol-P-Glc) onto the lipid-linked oligosaccharide intermediate Glc(2)Man(9)GlcNAc(2)-PP-Dol to produce Glc(3)Man(9)GlcNAc(2)-PP-Dol. This is Dol-P-Glc:Glc(2)Man(9)GlcNAc(2)-PP-Dol alpha-1,2-glucosyltransferase from Homo sapiens (Human).